We begin with the raw amino-acid sequence, 95 residues long: Aspartyl/glutamyl-tRNA(Asn/Gln) amidotransferase subunit C (95 aa).

The protein belongs to the GatC family. As to quaternary structure, heterotrimer of A, B and C subunits.

The catalysed reaction is L-glutamyl-tRNA(Gln) + L-glutamine + ATP + H2O = L-glutaminyl-tRNA(Gln) + L-glutamate + ADP + phosphate + H(+). The enzyme catalyses L-aspartyl-tRNA(Asn) + L-glutamine + ATP + H2O = L-asparaginyl-tRNA(Asn) + L-glutamate + ADP + phosphate + 2 H(+). Allows the formation of correctly charged Asn-tRNA(Asn) or Gln-tRNA(Gln) through the transamidation of misacylated Asp-tRNA(Asn) or Glu-tRNA(Gln) in organisms which lack either or both of asparaginyl-tRNA or glutaminyl-tRNA synthetases. The reaction takes place in the presence of glutamine and ATP through an activated phospho-Asp-tRNA(Asn) or phospho-Glu-tRNA(Gln). This is Aspartyl/glutamyl-tRNA(Asn/Gln) amidotransferase subunit C from Geotalea daltonii (strain DSM 22248 / JCM 15807 / FRC-32) (Geobacter daltonii).